Reading from the N-terminus, the 695-residue chain is WD repeat-containing protein 93 (695 aa).

The segment at 1–35 (MSSFKGNQAQKRRLSVFPKGPLEIPSPTEADWPKD) is disordered. Residues 421–460 (PCAAPIVMSQISSFSSYLALVCEDGVLILWDLAEGFLFGV) form a WD repeat.

In terms of tissue distribution, testis-specific. Expressed in spermatogonia, spermatocytes and spermatids.

The sequence is that of WD repeat-containing protein 93 (Wdr93) from Mus musculus (Mouse).